Consider the following 320-residue polypeptide: o-succinylbenzoate synthase (320 aa).

The active-site Proton donor is K133. Positions 161, 190, and 213 each coordinate Mg(2+). Catalysis depends on K235, which acts as the Proton acceptor.

It belongs to the mandelate racemase/muconate lactonizing enzyme family. MenC type 1 subfamily. Requires a divalent metal cation as cofactor.

The catalysed reaction is (1R,6R)-6-hydroxy-2-succinyl-cyclohexa-2,4-diene-1-carboxylate = 2-succinylbenzoate + H2O. It participates in quinol/quinone metabolism; 1,4-dihydroxy-2-naphthoate biosynthesis; 1,4-dihydroxy-2-naphthoate from chorismate: step 4/7. It functions in the pathway quinol/quinone metabolism; menaquinone biosynthesis. In terms of biological role, converts 2-succinyl-6-hydroxy-2,4-cyclohexadiene-1-carboxylate (SHCHC) to 2-succinylbenzoate (OSB). The polypeptide is o-succinylbenzoate synthase (Salmonella typhi).